The sequence spans 174 residues: Ribosome maturation factor RimP (174 aa).

This sequence belongs to the RimP family.

It is found in the cytoplasm. Required for maturation of 30S ribosomal subunits. In Acinetobacter baylyi (strain ATCC 33305 / BD413 / ADP1), this protein is Ribosome maturation factor RimP.